A 514-amino-acid chain; its full sequence is 2-isopropylmalate synthase (514 aa).

Residues 5 to 268 form the Pyruvate carboxyltransferase domain; the sequence is LIIFDTTLRD…DVGLDTTQIV (264 aa). Residues Asp14, His202, His204, and Asn239 each coordinate Mn(2+). The regulatory domain stretch occupies residues 395 to 514; sequence KFVSLSQRSE…KDDKLNPQRS (120 aa).

The protein belongs to the alpha-IPM synthase/homocitrate synthase family. LeuA type 1 subfamily. Homodimer. Mn(2+) serves as cofactor.

Its subcellular location is the cytoplasm. The enzyme catalyses 3-methyl-2-oxobutanoate + acetyl-CoA + H2O = (2S)-2-isopropylmalate + CoA + H(+). It participates in amino-acid biosynthesis; L-leucine biosynthesis; L-leucine from 3-methyl-2-oxobutanoate: step 1/4. Its function is as follows. Catalyzes the condensation of the acetyl group of acetyl-CoA with 3-methyl-2-oxobutanoate (2-ketoisovalerate) to form 3-carboxy-3-hydroxy-4-methylpentanoate (2-isopropylmalate). The chain is 2-isopropylmalate synthase from Burkholderia ambifaria (strain ATCC BAA-244 / DSM 16087 / CCUG 44356 / LMG 19182 / AMMD) (Burkholderia cepacia (strain AMMD)).